The sequence spans 1584 residues: Cilia- and flagella-associated protein 74 (1584 aa).

Positions 300–379 (RKFQAWDRAK…EAEEEKRKKQ (80 aa)) form a coiled coil. Positions 692 to 706 (SEQQLEGTESSQADM) are enriched in polar residues. The disordered stretch occupies residues 692–739 (SEQQLEGTESSQADMQSRKELEKLDKEQEEEQPAEPERLTTVIPPSEE). Basic and acidic residues predominate over residues 707-717 (QSRKELEKLDK).

The protein belongs to the CFAP74 family.

It localises to the cytoplasm. It is found in the cytoskeleton. The protein resides in the cilium axoneme. Its subcellular location is the flagellum axoneme. In terms of biological role, as part of the central apparatus of the cilium axoneme may play a role in cilium movement. May play an important role in sperm architecture and function. The sequence is that of Cilia- and flagella-associated protein 74 from Homo sapiens (Human).